We begin with the raw amino-acid sequence, 104 residues long: Small ribosomal subunit protein uS10 (104 aa).

It belongs to the universal ribosomal protein uS10 family. Part of the 30S ribosomal subunit.

Its function is as follows. Involved in the binding of tRNA to the ribosomes. The protein is Small ribosomal subunit protein uS10 of Helicobacter pylori (strain J99 / ATCC 700824) (Campylobacter pylori J99).